Reading from the N-terminus, the 885-residue chain is Alanine--tRNA ligase (885 aa).

Zn(2+) is bound by residues H569, H573, C672, and H676.

It belongs to the class-II aminoacyl-tRNA synthetase family. Zn(2+) serves as cofactor.

It localises to the cytoplasm. The catalysed reaction is tRNA(Ala) + L-alanine + ATP = L-alanyl-tRNA(Ala) + AMP + diphosphate. In terms of biological role, catalyzes the attachment of alanine to tRNA(Ala) in a two-step reaction: alanine is first activated by ATP to form Ala-AMP and then transferred to the acceptor end of tRNA(Ala). Also edits incorrectly charged Ser-tRNA(Ala) and Gly-tRNA(Ala) via its editing domain. The chain is Alanine--tRNA ligase from Chlorobaculum tepidum (strain ATCC 49652 / DSM 12025 / NBRC 103806 / TLS) (Chlorobium tepidum).